A 379-amino-acid polypeptide reads, in one-letter code: Homoserine O-succinyltransferase (379 aa).

Residues 51–360 (NAVLICHALS…DSPYGHDAFL (310 aa)) form the AB hydrolase-1 domain. The active-site Nucleophile is Ser157. Arg227 is a binding site for substrate. Active-site residues include Asp323 and His356. Asp357 provides a ligand contact to substrate.

It belongs to the AB hydrolase superfamily. MetX family. In terms of assembly, homodimer.

The protein resides in the cytoplasm. It catalyses the reaction L-homoserine + succinyl-CoA = O-succinyl-L-homoserine + CoA. Its pathway is amino-acid biosynthesis; L-methionine biosynthesis via de novo pathway; O-succinyl-L-homoserine from L-homoserine: step 1/1. Its activity is regulated as follows. Requires MetW for activity. Its function is as follows. Transfers a succinyl group from succinyl-CoA to L-homoserine, forming succinyl-L-homoserine. The sequence is that of Homoserine O-succinyltransferase from Pseudomonas putida (strain ATCC 47054 / DSM 6125 / CFBP 8728 / NCIMB 11950 / KT2440).